Reading from the N-terminus, the 61-residue chain is Beta-defensin 13 (61 aa).

A signal peptide spans 1-21 (MRLLYLLFAAVMLLFLQAVPA). Positions 24, 40, 44, 51, 53, 54, 58, and 61 each coordinate a 1,2-diacyl-sn-glycero-3-phosphate. 3 cysteine pairs are disulfide-bonded: cysteine 31–cysteine 59, cysteine 38–cysteine 52, and cysteine 42–cysteine 60.

Belongs to the beta-defensin family. As to quaternary structure, monomeric. Forms multimeric, probably including tetrameric, complexes in the presence of phospholipid phosphatidic acid.

It localises to the secreted. Its function is as follows. Exhibits antimicrobial activity against fungi. Antimicrobial activity in a pH-dependent manner against the yeast C.albicans; activity is salt tolerant and retains antifungal activity in NaCl concentrations of 100mM. Permeabilizes C.albicans cell membranes via targeting plasma membrane phospholipid phosphatidic acid. In Crocodylus porosus (Saltwater crocodile), this protein is Beta-defensin 13.